The following is a 280-amino-acid chain: Energy-coupling factor transporter ATP-binding protein EcfA2 (280 aa).

Residues 3–245 (INLQNVSYTY…VSLLEKKQLG (243 aa)) form the ABC transporter domain. ATP is bound at residue 40 to 47 (GHTGSGKS).

This sequence belongs to the ABC transporter superfamily. Energy-coupling factor EcfA family. As to quaternary structure, forms a stable energy-coupling factor (ECF) transporter complex composed of 2 membrane-embedded substrate-binding proteins (S component), 2 ATP-binding proteins (A component) and 2 transmembrane proteins (T component).

The protein resides in the cell membrane. In terms of biological role, ATP-binding (A) component of a common energy-coupling factor (ECF) ABC-transporter complex. Unlike classic ABC transporters this ECF transporter provides the energy necessary to transport a number of different substrates. The protein is Energy-coupling factor transporter ATP-binding protein EcfA2 of Streptococcus pyogenes serotype M3 (strain ATCC BAA-595 / MGAS315).